A 1029-amino-acid polypeptide reads, in one-letter code: Tyrosine-protein kinase-like otk (1029 aa).

The first 18 residues, 1-18 (MISIYGLVMALMMASVLA), serve as a signal peptide directing secretion. Over 19 to 577 (SSSRFQRVPQ…GGDGFLVTRA (559 aa)) the chain is Extracellular. Ig-like C2-type domains lie at 21–104 (SRFQ…REAS), 105–195 (PPAK…RVMS), 247–361 (PEDL…APIS), 364–459 (PGIL…VAIN), and 464–554 (PKFS…VQLV). Asn-35 carries N-linked (GlcNAc...) asparagine glycosylation. 4 disulfides stabilise this stretch: Cys-42–Cys-91, Cys-133–Cys-184, Cys-272–Cys-350, and Cys-395–Cys-443. N-linked (GlcNAc...) asparagine glycosylation is found at Asn-332, Asn-413, Asn-425, Asn-440, Asn-453, Asn-508, and Asn-520. Cys-486 and Cys-538 are joined by a disulfide. The helical transmembrane segment at 578–598 (VLITMTVALAYIVLVVGLMLW) threads the bilayer. The Cytoplasmic segment spans residues 599-1029 (CRYRRQARKA…LSKAMQIAEK (431 aa)). Disordered stretches follow at residues 613 to 675 (LSTK…KKSA) and 714 to 756 (SPSD…KTSM). Residues 651–669 (KSSGDAQKSDDTACSQQSR) are compositionally biased toward polar residues. Ser-674 is modified (phosphoserine). The Protein kinase; inactive domain maps to 688–1024 (LSELIQIGRG…QLGAALSKAM (337 aa)). Residues 716-727 (SDKDADTEKQHS) show a composition bias toward basic and acidic residues.

It belongs to the protein kinase superfamily. Tyr protein kinase family. Insulin receptor subfamily. In terms of assembly, interacts with plexA; component of a receptor complex that mediates the repulsive signaling in response to Semaphorin ligands.

The protein resides in the cell membrane. Its function is as follows. Acts as a calcium-dependent, homophilic cell adhesion molecule that regulates neural recognition during the development of the nervous system. Component of the repulsive Plexin signaling response to regulate motor axon guidance at the embryonic stage. Also component of a receptor complex that is required in the adult visual system to innervate the lamina layer; specific targeting of R1-R6 axons. In Drosophila sechellia (Fruit fly), this protein is Tyrosine-protein kinase-like otk.